A 158-amino-acid chain; its full sequence is Small ribosomal subunit protein uS9 (158 aa).

Belongs to the universal ribosomal protein uS9 family.

The protein is Small ribosomal subunit protein uS9 of Rhodopseudomonas palustris (strain HaA2).